Consider the following 723-residue polypeptide: Threonine--tRNA ligase, mitochondrial (723 aa).

Ser-57 carries the post-translational modification Phosphoserine. The TGS domain maps to 64 to 126; the sequence is RTIKISLPEG…ETDCHLRFLT (63 aa).

Belongs to the class-II aminoacyl-tRNA synthetase family. Homodimer.

The protein localises to the mitochondrion matrix. It carries out the reaction tRNA(Thr) + L-threonine + ATP = L-threonyl-tRNA(Thr) + AMP + diphosphate + H(+). Its function is as follows. Catalyzes the attachment of threonine to tRNA(Thr) in a two-step reaction: threonine is first activated by ATP to form Thr-AMP and then transferred to the acceptor end of tRNA(Thr). Also edits incorrectly charged tRNA(Thr) via its editing domain. This is Threonine--tRNA ligase, mitochondrial (Tars2) from Rattus norvegicus (Rat).